Here is a 1214-residue protein sequence, read N- to C-terminus: Protein charlatan (1214 aa).

Disordered stretches follow at residues 1-20 (MATL…QSSN), 213-238 (HVNQ…RQEH), and 250-284 (SANA…GGRK). Residues 258–276 (AQSTPTSAPSNSSGGSTSS) are compositionally biased toward low complexity. 2 C2H2-type zinc fingers span residues 305-327 (YACT…ENIH) and 333-356 (FQCY…LRMH). 2 disordered regions span residues 367 to 397 (RRHV…NVTI) and 463 to 488 (PVAS…SGLL). Residues 473 to 485 (GSHGGNGNGGSGS) are compositionally biased toward gly residues. C2H2-type zinc fingers lie at residues 496–518 (FTCC…LNTH) and 522–545 (FVCL…LKVH). Disordered regions lie at residues 741 to 790 (SASS…ATSP), 848 to 946 (NDED…SGPS), and 1062 to 1084 (LSTP…SNAS). Low complexity-rich tracts occupy residues 855–871 (QQHQ…QQQQ), 885–896 (NNNNNNNSNNNN), 923–946 (SPGT…SGPS), and 1071–1084 (KAAP…SNAS).

Expressed in the PNS and CNS. In early blastoderm stages, it is ubiquitously expressed, then, before stage 5, it disappears from the poles of the embryo and faint stripes are visible. At stage 5, it also accumulates in the dorsal region, cephalic furrow ectodermal patches between the tracheal pits, where neurons of the PNS appear. In older embryos (stage 15) a strong expression is mostly restricted to the central nervous system (CNS) and PNS. In PNS, the pattern suggests that expression occur in many of the neurons of the ventral, lateral and dorsal clusters of neurons. In third instar wing disks, it is expressed in rows of cells on either side of the prospective anterior wing margin and in groups of cells that coincide with proneural clusters of ac/sc expression. Also expressed independently of ac/sc in certain areas of the disk, such as the postnotum and posterior dorsal proximal wing. Expressed in the proneural clusters of the leg disks and in the eye/antenna disk.

It localises to the nucleus. Its function is as follows. Probable transcription factor involved in the development of the adult pattern of macrochaetae. Required for accumulation of achaete (ac) and scute (sc) in proneural clusters. Probably acts by binding to the proneural cluster-specific enhancers of the ac/sc complex and increasing enhancer efficiency, thereby acting as a stimulator of ac/sc expression in proneural clusters. Also required for correct development of the embryonic/larval peripheral nervous system (PNS). The chain is Protein charlatan (chn) from Drosophila melanogaster (Fruit fly).